A 372-amino-acid chain; its full sequence is MGNSYITKEDNQISATSEQTEDSACLSAMVLTTNLVYPAVLNAAIDLNLFEIIAKATPPGAFMSPSEIASKLPASTQHSDLPNRLDRMLRLLASYSVLTSTTRTIEDGGAERVYGLSMVGKYLVPDESRGYLASFTTFLCYPALLQVWMNFKEAVVDEDIDLFKNVHGVTKYEFMGKDKKMNQIFNKSMVDVCATEMKRMLEIYTGFEGISTLVDVGGGSGRNLELIISKYPLIKGINFDLPQVIENAPPLSGIEHVGGDMFASVPQGDAMILKAVCHNWSDEKCIEFLSNCHKALSPNGKVIIVEFILPEEPNTSEESKLVSTLDNLMFITVGGRERTEKQYEKLSKLSGFSKFQVACRAFNSLGVMEFYK.

Positions 217, 240, 260, 261, and 274 each coordinate S-adenosyl-L-methionine. The Proton acceptor role is filled by His278.

This sequence belongs to the class I-like SAM-binding methyltransferase superfamily. Cation-independent O-methyltransferase family. COMT subfamily. Monomer. Homodimer. As to expression, roots (at protein level). Expressed mainly in roots, and to a lesser extent in root nodules. In the roots, expression is not detected in the root tip or the cells immediately behind the tip, but is detected in tissues starting 1.5-2.0 mm distal to the root tip. Detected in the epidermal and cortical cells of 2 day old roots, with lower levels in vascular tissue.

It catalyses the reaction isoliquiritigenin + S-adenosyl-L-methionine = 2'-O-methylisoliquiritigenin + S-adenosyl-L-homocysteine + H(+). The enzyme catalyses licodione + S-adenosyl-L-methionine = 2'-O-methyllicodione + S-adenosyl-L-homocysteine + H(+). With respect to regulation, inhibited by 1 mM Co(2+), Cu(2+), Zn(2+) or Fe(2+). Non-competitively inhibited by S-adenosyl-L-homocysteine. Competitively inhibited by 2'-O-methylisoliquiritigenin. Functionally, methylates the 2'-hydroxyl of isoliquiritigenin and licodione. Does not methylate narigenin chalcone, caffeic acid or daidzein. Involved in the root nodulation initiation by promoting the biosynthesis of nod-inducing molecules. This Medicago sativa (Alfalfa) protein is Isoliquiritigenin 2'-O-methyltransferase.